The following is a 902-amino-acid chain: Probable polyribonucleotide nucleotidyltransferase 1, chloroplastic (902 aa).

Residues 1-66 constitute a chloroplast transit peptide; it reads MLATPGALHH…RRRAAGARVR (66 aa). A compositionally biased stretch (low complexity) spans 44 to 53; that stretch reads VAASASTSRR. The disordered stretch occupies residues 44–93; sequence VAASASTSRRGGARRRAAGARVRASVGEEAPPVVTEEASTSGGPTKFSTK. Polar residues predominate over residues 80–91; that stretch reads EASTSGGPTKFS. One can recognise a KH domain in the interval 693 to 753; that stretch reads PLIHVMKVKP…SSLEKSKAII (61 aa). One can recognise an S1 motif domain in the interval 763–832; it reads GEIYRNCEIK…DKGQLRLSSR (70 aa). The interval 833 to 902 is disordered; it reads ALLPDANQES…ASQGSEMGTE (70 aa). A compositionally biased stretch (polar residues) spans 839–850; it reads NQESSSKQQAGG. Basic and acidic residues predominate over residues 852–862; the sequence is TREKAPQKDNL. Positions 877 to 888 are enriched in low complexity; that stretch reads EASTAENNATAS.

Belongs to the polyribonucleotide nucleotidyltransferase family.

It localises to the plastid. It is found in the chloroplast. The catalysed reaction is RNA(n+1) + phosphate = RNA(n) + a ribonucleoside 5'-diphosphate. In terms of biological role, involved in the metabolism of all major classes of plastid RNAs. Required for efficient 3'-end processing of mRNAs and 3'-end maturation of rRNA transcripts, but is not sufficient to mediate their degradation. Mediates tRNA degradation. May function as a poly(A) mRNA 3'-5' degrading phosphorylase. This chain is Probable polyribonucleotide nucleotidyltransferase 1, chloroplastic (PNP1), found in Oryza sativa subsp. japonica (Rice).